The following is an 88-amino-acid chain: Putative membrane protein insertion efficiency factor (88 aa).

The segment at 65 to 88 (LDFVPPKKDKNDDSGHTCKAHHHH) is disordered. A compositionally biased stretch (basic and acidic residues) spans 69–80 (PPKKDKNDDSGH).

It belongs to the UPF0161 family.

Its subcellular location is the cell membrane. Could be involved in insertion of integral membrane proteins into the membrane. This Listeria innocua serovar 6a (strain ATCC BAA-680 / CLIP 11262) protein is Putative membrane protein insertion efficiency factor.